A 339-amino-acid chain; its full sequence is Geranylgeranyl transferase type-2 subunit beta (339 aa).

Threonine 11 is modified (phosphothreonine). 6 PFTB repeats span residues 28–69 (LEKH…DLMG), 76–117 (REEI…TLYD), 124–165 (VDKV…ALLG), 172–213 (VEKA…AITS), 220–261 (SDLL…KIIG), and 268–310 (REKL…SLLG). Residues 198-200 (HAG) and 240-243 (RPEK) contribute to the geranylgeranyl diphosphate site. Zn(2+) is bound by residues aspartate 246 and cysteine 248. Geranylgeranyl diphosphate contacts are provided by residues tyrosine 249 and 249-252 (YSWW). Histidine 298 serves as a coordination point for Zn(2+).

Belongs to the protein prenyltransferase subunit beta family. Heterotrimer composed of RABGGTA, RABGGTB and CHM; within this trimer, RABGGTA and RABGGTB form the catalytic component B, while CHM (component A) mediates peptide substrate binding. The Rab GGTase dimer (RGGT) interacts with CHM (component A) prior to Rab protein binding; the association is stabilized by geranylgeranyl pyrophosphate (GGpp). The CHM:RGGT:Rab complex is destabilized by GGpp. Interaction of RABGGTB with prenylated PTP4A2 precludes its association with RABGGTA and inhibits enzyme activity. Interacts with CHODL. Interacts with non-phosphorylated form of RAB8A; phosphorylation of RAB8A at 'Thr-72' disrupts this interaction. The cofactor is Zn(2+). As to expression, ubiquitous. Detected in all the major organs in adult animals.

The enzyme catalyses geranylgeranyl diphosphate + L-cysteinyl-[protein] = S-geranylgeranyl-L-cysteinyl-[protein] + diphosphate. Its activity is regulated as follows. The enzymatic reaction requires the aid of a Rab escort protein (also called component A), such as CHM. Its function is as follows. Catalyzes the transfer of a geranylgeranyl moiety from geranylgeranyl diphosphate to both cysteines of Rab proteins with the C-terminal sequence -XXCC, -XCXC and -CCXX, such as RAB1A, RAB3A, RAB5A and RAB7A. The polypeptide is Geranylgeranyl transferase type-2 subunit beta (Rabggtb) (Mus musculus (Mouse)).